Here is a 211-residue protein sequence, read N- to C-terminus: Protein-L-isoaspartate O-methyltransferase (211 aa).

Ser60 is a catalytic residue.

The protein belongs to the methyltransferase superfamily. L-isoaspartyl/D-aspartyl protein methyltransferase family.

Its subcellular location is the cytoplasm. It carries out the reaction [protein]-L-isoaspartate + S-adenosyl-L-methionine = [protein]-L-isoaspartate alpha-methyl ester + S-adenosyl-L-homocysteine. Its function is as follows. Catalyzes the methyl esterification of L-isoaspartyl residues in peptides and proteins that result from spontaneous decomposition of normal L-aspartyl and L-asparaginyl residues. It plays a role in the repair and/or degradation of damaged proteins. The sequence is that of Protein-L-isoaspartate O-methyltransferase from Pseudomonas paraeruginosa (strain DSM 24068 / PA7) (Pseudomonas aeruginosa (strain PA7)).